An 87-amino-acid chain; its full sequence is MANHKSALKRIKQTEKRTERNRHVRSTLRTFIKRVREAAAAKDAALAKEALAAAIPVIDTAASKGVIHSSNASRNISRLTKLVNTLG.

A compositionally biased stretch (basic residues) spans 1 to 11; it reads MANHKSALKRI. The segment at 1 to 23 is disordered; sequence MANHKSALKRIKQTEKRTERNRH.

This sequence belongs to the bacterial ribosomal protein bS20 family.

Its function is as follows. Binds directly to 16S ribosomal RNA. The chain is Small ribosomal subunit protein bS20 from Geotalea uraniireducens (strain Rf4) (Geobacter uraniireducens).